The following is a 361-amino-acid chain: Replication factor C subunit 3 (361 aa).

Residues 1–28 (MAGATAATPMDIDAAAPPPGAAAKGKAP) are compositionally biased toward low complexity. The tract at residues 1–39 (MAGATAATPMDIDAAAPPPGAAAKGKAPLSSTPGGRAAP) is disordered. 77-84 (YGPPGTGK) provides a ligand contact to ATP.

It belongs to the activator 1 small subunits family. Heterotetramer of subunits RFC2, RFC3, RFC4 and RFC5 that can form a complex with RFC1. As to expression, expressed in roots, leaves, shoot apical meristem (SAM), flag leaves and panicles.

It is found in the nucleus. Functionally, may be involved in DNA replication and thus regulate cell proliferation. This is Replication factor C subunit 3 (RFC3) from Oryza sativa subsp. japonica (Rice).